The primary structure comprises 375 residues: E3 ubiquitin-protein ligase RHF2A (375 aa).

Residues 33-74 (CSICLESFCESDPSTLTSCKHEYHLQCILEWCQRSSQCPMCW) form an RING-type; atypical zinc finger. Positions 146 to 159 (RARHGVRREGHRSR) are enriched in basic residues. Disordered regions lie at residues 146–165 (RARHGVRREGHRSRSSSQGH), 172–262 (SSQP…SESL), and 318–375 (ERLE…SGSS). Over residues 178–188 (SSPPPHPPMPS) the composition is skewed to pro residues. Polar residues-rich tracts occupy residues 211–245 (SHQSNTQPPTSSHPRQVSPSASDSNSRPLNQSSPS) and 327–336 (RPSTASVSDV). Basic and acidic residues predominate over residues 337–365 (SENHTPETNNEHNRAAAGDEHSVNERGVK).

The catalysed reaction is S-ubiquitinyl-[E2 ubiquitin-conjugating enzyme]-L-cysteine + [acceptor protein]-L-lysine = [E2 ubiquitin-conjugating enzyme]-L-cysteine + N(6)-ubiquitinyl-[acceptor protein]-L-lysine.. It functions in the pathway protein modification; protein ubiquitination. Functionally, E3 ubiquitin-protein ligase involved in the positive regulation of the gametogenesis progression. Required for the degradation of KRP6, a cyclin-dependent kinase inhibitor which accumulates during meiosis and blocks the progression of subsequent mitoses during gametophytes development. Functions in association with RHF1A. The polypeptide is E3 ubiquitin-protein ligase RHF2A (Arabidopsis thaliana (Mouse-ear cress)).